The following is a 261-amino-acid chain: Cytochrome c oxidase subunit 3 (261 aa).

At 1-15 (MTHQTHAYHMVNPSP) the chain is on the mitochondrial matrix side. Residues 16-34 (WPLTGALSALLMTSGLIMW) form a helical membrane-spanning segment. The Mitochondrial intermembrane segment spans residues 35-40 (FHFNST). The helical transmembrane segment at 41 to 66 (TLLMLGLTTNMLTMYQWWRDVIREST) threads the bilayer. Topologically, residues 67–72 (FQGHHT) are mitochondrial matrix. The chain crosses the membrane as a helical span at residues 73–105 (PNVQKGLRYGMILFIISEVLFFTGFFWAFYHSS). At 106–128 (LAPTPELGGCWPPTGIHPLNPLE) the chain is on the mitochondrial intermembrane side. A helical transmembrane segment spans residues 129 to 152 (VPLLNTSVLLASGVSITWAHHSLM). The Mitochondrial matrix segment spans residues 153 to 155 (EGN). Residues 156 to 183 (RNHMLQALFITIALGVYFTLLQASEYYE) form a helical membrane-spanning segment. Residues 184–190 (APFTISD) are Mitochondrial intermembrane-facing. A helical membrane pass occupies residues 191-223 (GVYGSTFFVATGFHGLHVIIGSTFLIVCFFRQL). Residues 224 to 232 (KFHFTSSHH) are Mitochondrial matrix-facing. The chain crosses the membrane as a helical span at residues 233–256 (FGFEAAAWYWHFVDVVWLFLYVSI). The Mitochondrial intermembrane portion of the chain corresponds to 257-261 (YWWGS).

Belongs to the cytochrome c oxidase subunit 3 family. In terms of assembly, component of the cytochrome c oxidase (complex IV, CIV), a multisubunit enzyme composed of 14 subunits. The complex is composed of a catalytic core of 3 subunits MT-CO1, MT-CO2 and MT-CO3, encoded in the mitochondrial DNA, and 11 supernumerary subunits COX4I, COX5A, COX5B, COX6A, COX6B, COX6C, COX7A, COX7B, COX7C, COX8 and NDUFA4, which are encoded in the nuclear genome. The complex exists as a monomer or a dimer and forms supercomplexes (SCs) in the inner mitochondrial membrane with NADH-ubiquinone oxidoreductase (complex I, CI) and ubiquinol-cytochrome c oxidoreductase (cytochrome b-c1 complex, complex III, CIII), resulting in different assemblies (supercomplex SCI(1)III(2)IV(1) and megacomplex MCI(2)III(2)IV(2)).

The protein localises to the mitochondrion inner membrane. The catalysed reaction is 4 Fe(II)-[cytochrome c] + O2 + 8 H(+)(in) = 4 Fe(III)-[cytochrome c] + 2 H2O + 4 H(+)(out). Its function is as follows. Component of the cytochrome c oxidase, the last enzyme in the mitochondrial electron transport chain which drives oxidative phosphorylation. The respiratory chain contains 3 multisubunit complexes succinate dehydrogenase (complex II, CII), ubiquinol-cytochrome c oxidoreductase (cytochrome b-c1 complex, complex III, CIII) and cytochrome c oxidase (complex IV, CIV), that cooperate to transfer electrons derived from NADH and succinate to molecular oxygen, creating an electrochemical gradient over the inner membrane that drives transmembrane transport and the ATP synthase. Cytochrome c oxidase is the component of the respiratory chain that catalyzes the reduction of oxygen to water. Electrons originating from reduced cytochrome c in the intermembrane space (IMS) are transferred via the dinuclear copper A center (CU(A)) of subunit 2 and heme A of subunit 1 to the active site in subunit 1, a binuclear center (BNC) formed by heme A3 and copper B (CU(B)). The BNC reduces molecular oxygen to 2 water molecules using 4 electrons from cytochrome c in the IMS and 4 protons from the mitochondrial matrix. In Gazella bennettii (Chinkara), this protein is Cytochrome c oxidase subunit 3 (MT-CO3).